The chain runs to 375 residues: Ubl carboxyl-terminal hydrolase 18 (375 aa).

A disordered region spans residues 18–45 (ESPQSPADLEEKKEEDSNMKREQPRERP). Basic and acidic residues predominate over residues 26-45 (LEEKKEEDSNMKREQPRERP). The USP domain maps to 55 to 373 (VGLHNIGQTC…TAYLLVYMKM (319 aa)). Cys64 functions as the Nucleophile in the catalytic mechanism. Catalysis depends on His321, which acts as the Proton acceptor.

Belongs to the peptidase C19 family. As to quaternary structure, interacts with STAT2; the interaction is direct. Interacts with IFNAR2; indirectly via STAT2, it negatively regulates the assembly of the ternary interferon-IFNAR1-IFNAR2 complex and inhibits type I interferon signaling. Interacts with STING1. Interacts with USP20.

It catalyses the reaction Thiol-dependent hydrolysis of ester, thioester, amide, peptide and isopeptide bonds formed by the C-terminal Gly of ubiquitin (a 76-residue protein attached to proteins as an intracellular targeting signal).. Interferon-induced ISG15-specific protease that plays a crucial role for maintaining a proper balance of ISG15-conjugated proteins in cells. Regulates protein ISGylation by efficiently cleaving ISG15 conjugates linked via isopeptide bonds. Regulates T-cell activation and T-helper 17 (Th17) cell differentiation by deubiquitinating TAK1, likely to keep TAK1-TAB complexes in steady conditions. In turn, restricts activation of NF-kappa-B, NFAT, and JNK as well as expression of IL2 in T-cells after TCR activation. Acts as a molecular adapter with USP20 to promote innate antiviral response through deubiquitinating STING1. Involved also in the negative regulation of the inflammatory response triggered by type I interferon. Upon recruitment by STAT2 to the type I interferon receptor subunit IFNAR2 interferes with the assembly of the ternary interferon-IFNAR1-IFNAR2 complex and acts as a negative regulator of the type I interferon signaling pathway. This Pongo abelii (Sumatran orangutan) protein is Ubl carboxyl-terminal hydrolase 18 (USP18).